Here is a 142-residue protein sequence, read N- to C-terminus: Hemoglobin subunit alpha-1 (142 aa).

A Globin domain is found at V2 to R142. H59 lines the O2 pocket. H88 serves as a coordination point for heme b.

This sequence belongs to the globin family. As to quaternary structure, heterotetramer of two alpha chains and two beta chains.

Functionally, involved in oxygen transport from the lung to the various peripheral tissues. In terms of biological role, hemopressin acts as an antagonist peptide of the cannabinoid receptor CNR1. Hemopressin-binding efficiently blocks cannabinoid receptor CNR1 and subsequent signaling. This chain is Hemoglobin subunit alpha-1 (HBA1), found in Capra hircus (Goat).